The following is a 292-amino-acid chain: 2-(5''-triphosphoribosyl)-3'-dephosphocoenzyme-A synthase (292 aa).

The protein belongs to the CitG/MdcB family.

The catalysed reaction is 3'-dephospho-CoA + ATP = 2'-(5''-triphospho-alpha-D-ribosyl)-3'-dephospho-CoA + adenine. In terms of biological role, catalyzes the formation of 2-(5''-triphosphoribosyl)-3'-dephosphocoenzyme-A, the precursor of the prosthetic group of the holo-acyl carrier protein (gamma chain) of citrate lyase, from ATP and dephospho-CoA. The polypeptide is 2-(5''-triphosphoribosyl)-3'-dephosphocoenzyme-A synthase (Escherichia coli O7:K1 (strain IAI39 / ExPEC)).